Consider the following 367-residue polypeptide: Porin Omp2a (367 aa).

The N-terminal stretch at 1-22 (MNIKSLLLGSAAALVAASGAQA) is a signal peptide.

The protein belongs to the alphaproteobacteria porin family. Monomer.

It is found in the cell outer membrane. Forms passive diffusion pores that allow small molecular weight hydrophilic materials across the outer membrane. This chain is Porin Omp2a (omp2a), found in Brucella melitensis biotype 1 (strain ATCC 23456 / CCUG 17765 / NCTC 10094 / 16M).